Here is a 308-residue protein sequence, read N- to C-terminus: Ribosomal RNA small subunit methyltransferase H (308 aa).

Residues 32–34 (AGH), D51, F78, D99, and Q106 each bind S-adenosyl-L-methionine.

It belongs to the methyltransferase superfamily. RsmH family.

Its subcellular location is the cytoplasm. It catalyses the reaction cytidine(1402) in 16S rRNA + S-adenosyl-L-methionine = N(4)-methylcytidine(1402) in 16S rRNA + S-adenosyl-L-homocysteine + H(+). Its function is as follows. Specifically methylates the N4 position of cytidine in position 1402 (C1402) of 16S rRNA. This chain is Ribosomal RNA small subunit methyltransferase H, found in Mesoplasma florum (strain ATCC 33453 / NBRC 100688 / NCTC 11704 / L1) (Acholeplasma florum).